The following is a 182-amino-acid chain: NADH-quinone oxidoreductase subunit I (182 aa).

4Fe-4S ferredoxin-type domains follow at residues 50–82 and 92–121; these read IILSRDPDGDERCVACNLCAVACPVGCISLQKA and EFFRINFSRCIFCGLCEEACPTTAIQMTPD. Residues Cys62, Cys65, Cys68, Cys72, Cys101, Cys104, Cys107, and Cys111 each coordinate [4Fe-4S] cluster.

This sequence belongs to the complex I 23 kDa subunit family. As to quaternary structure, NDH-1 is composed of 14 different subunits. Subunits NuoA, H, J, K, L, M, N constitute the membrane sector of the complex. [4Fe-4S] cluster serves as cofactor.

The protein resides in the cell inner membrane. The enzyme catalyses a quinone + NADH + 5 H(+)(in) = a quinol + NAD(+) + 4 H(+)(out). NDH-1 shuttles electrons from NADH, via FMN and iron-sulfur (Fe-S) centers, to quinones in the respiratory chain. The immediate electron acceptor for the enzyme in this species is believed to be ubiquinone. Couples the redox reaction to proton translocation (for every two electrons transferred, four hydrogen ions are translocated across the cytoplasmic membrane), and thus conserves the redox energy in a proton gradient. The chain is NADH-quinone oxidoreductase subunit I from Psychrobacter cryohalolentis (strain ATCC BAA-1226 / DSM 17306 / VKM B-2378 / K5).